The chain runs to 242 residues: MADKEALPKLREDFKMQNKSVFILGASGETGKVLLKEILGQNLFSKVTLIGRRKLTFEEEAYKNVNQEVVDFEKLDVYASAFQGHDVGFCCLGTTRSKAGAEGFVRVDRDYVLKSAELAKAGGCKHFNLLSSRGADKSSSFLYLQVKGEVEAKVEELKFDRLSVFRPGVLLCDRQESRPGEWLARKFFGSLPDSWASGYAVPVVTVVRAMLNNLVSPSSGQMELLENKAILHLGKDRDVPKL.

Ala2 carries the post-translational modification N-acetylalanine. The segment at 2–25 (ADKEALPKLREDFKMQNKSVFILG) is required for interaction with elongation factor EEF1A1. NADPH contacts are provided by Ser27, Gly28, Glu29, Thr30, Arg52, Arg53, Leu92, Gly93, Tyr143, Lys147, Leu170, and Arg178. Tyr143 (proton acceptor) is an active-site residue. Lys147 is a catalytic residue.

In terms of assembly, monomer. Forms homodimers during oxidative stress. Interacts (via N-terminus) with elongation factor EEF1A1 (via middle-region); the interaction is direct and competes with EEF1A1 binding to guanyl-nucleotide exchange factor EEF1B2, thereby inhibiting GDP for GTP exchange and reactivation of EEF1A1. Interacts with nuclear transport receptors XPO4, IPO5/RANBP5, IPO7, IPO9 and KPNB1 as well as GCN1L1/GCN1 and LRPPRC probably through their HEAT repeats. Binds NCOA5/CIA.

The protein localises to the cytoplasm. In terms of biological role, represses translation by preventing reactivation of elongation factor eEF1A. May also inhibit nuclear import by competing with nuclear import substrates for binding to a subset of nuclear transport receptors. Has additionally been proposed to act as a redox sensor involved in cellular oxidative stress surveillance. The chain is Protein HTATIP2 from Mus musculus (Mouse).